A 290-amino-acid chain; its full sequence is tRNA dimethylallyltransferase (290 aa).

Residue 11–18 participates in ATP binding; the sequence is GPTASGKS. 13–18 contacts substrate; it reads TASGKS. 2 interaction with substrate tRNA regions span residues 36–39 and 158–162; these read DSMQ and QRIVR.

Belongs to the IPP transferase family. In terms of assembly, monomer. Mg(2+) serves as cofactor.

It catalyses the reaction adenosine(37) in tRNA + dimethylallyl diphosphate = N(6)-dimethylallyladenosine(37) in tRNA + diphosphate. Functionally, catalyzes the transfer of a dimethylallyl group onto the adenine at position 37 in tRNAs that read codons beginning with uridine, leading to the formation of N6-(dimethylallyl)adenosine (i(6)A). The sequence is that of tRNA dimethylallyltransferase from Bartonella tribocorum (strain CIP 105476 / IBS 506).